The chain runs to 134 residues: kinetoplast-associated protein 3 (134 aa).

A propeptide spanning residues 1–10 (MLRRSPTLLR) is cleaved from the precursor. Low complexity predominate over residues 106–124 (PKAPKAAKSASSKVKTAAK). Residues 106 to 134 (PKAPKAAKSASSKVKTAAKTAKKTTAARK) form a disordered region. The span at 125 to 134 (TAKKTTAARK) shows a compositional bias: basic residues.

It belongs to the KAP family. As to quaternary structure, associates with the kinetoplast DNA network.

The protein localises to the mitochondrion matrix. The protein resides in the kinetoplast. In terms of biological role, histone H1-like DNA-binding protein involved in the organization and segregation of kinetoplast DNA (kDNA). The mitochondrial DNA of kinetoplastid protozoa consists of about 5,000 minicircles and 20 to 30 maxicircles. These circular DNAs are held together by catenation into a highly organized compact disk structure referred to as a kinetoplast DNA (kDNA) network. Binds preferentially to a specific fragment of minicircle DNA and is able to compact kDNA networks through DNA charge neutralization and condensation. The sequence is that of kinetoplast-associated protein 3 (KAP3) from Crithidia fasciculata.